A 214-amino-acid polypeptide reads, in one-letter code: Urease accessory protein UreE (214 aa).

The segment at 163–214 is disordered; it reads NAEPSGVDHSHEATDSGHGYGEDHDHDHSHDHNHDHDHNHDHDHSHSHDSHE. Positions 168 to 214 are enriched in basic and acidic residues; sequence GVDHSHEATDSGHGYGEDHDHDHSHDHNHDHDHNHDHDHSHSHDSHE.

It belongs to the UreE family.

Its subcellular location is the cytoplasm. In terms of biological role, involved in urease metallocenter assembly. Binds nickel. Probably functions as a nickel donor during metallocenter assembly. In Natronomonas pharaonis (strain ATCC 35678 / DSM 2160 / CIP 103997 / JCM 8858 / NBRC 14720 / NCIMB 2260 / Gabara) (Halobacterium pharaonis), this protein is Urease accessory protein UreE.